The chain runs to 253 residues: MDIIICKDEQEVGKAAAALIAPFATKGGTLGLATGSSPLSTYQELIRMYEAGEVSFKNCKAFLLDEYVGLTRDDENSYFKTIRKEFTDHIDIVDEEVYSPDGANPDPYEAAAEYEAKIAAESVDVQILGIGGNGHIAFNEPSSSLSGLTKVQALHPKTVEDNARFFNTIEEVPTHALTQGLGTLSRAQNIVLVATGEGKADAIRGTVEGPVTASCPGSILQMHNNATIIVDEAAASKLENADHYRLMEQLKLR.

The active-site Proton acceptor; for enolization step is the Asp65. Residue Asn133 is the For ring-opening step of the active site. The active-site Proton acceptor; for ring-opening step is the His135. Catalysis depends on Glu140, which acts as the For ring-opening step.

Belongs to the glucosamine/galactosamine-6-phosphate isomerase family. NagB subfamily.

The enzyme catalyses alpha-D-glucosamine 6-phosphate + H2O = beta-D-fructose 6-phosphate + NH4(+). It functions in the pathway amino-sugar metabolism; N-acetylneuraminate degradation; D-fructose 6-phosphate from N-acetylneuraminate: step 5/5. Functionally, catalyzes the reversible isomerization-deamination of glucosamine 6-phosphate (GlcN6P) to form fructose 6-phosphate (Fru6P) and ammonium ion. The polypeptide is Glucosamine-6-phosphate deaminase (Corynebacterium glutamicum (strain R)).